Consider the following 231-residue polypeptide: Ribose-5-phosphate isomerase A (231 aa).

Substrate contacts are provided by residues 28 to 31 (TGST), 83 to 86 (DGAD), and 96 to 99 (KGGG). E105 functions as the Proton acceptor in the catalytic mechanism. Residue K123 participates in substrate binding.

It belongs to the ribose 5-phosphate isomerase family. Homodimer.

It catalyses the reaction aldehydo-D-ribose 5-phosphate = D-ribulose 5-phosphate. It functions in the pathway carbohydrate degradation; pentose phosphate pathway; D-ribose 5-phosphate from D-ribulose 5-phosphate (non-oxidative stage): step 1/1. In terms of biological role, catalyzes the reversible conversion of ribose-5-phosphate to ribulose 5-phosphate. This Sinorhizobium fredii (strain NBRC 101917 / NGR234) protein is Ribose-5-phosphate isomerase A.